Here is a 413-residue protein sequence, read N- to C-terminus: Probable short/branched chain specific acyl-CoA dehydrogenase (413 aa).

Residues 152 to 161 and 186 to 188 contribute to the FAD site; these read FCLSESGSGS and WIT. Position 161 (Ser-161) interacts with substrate. Residues Tyr-208, Tyr-262, and 270–273 contribute to the substrate site; that span reads NEGR. Residues Arg-298, Gln-309, and 366 to 370 each bind FAD; that span reads SMLGG. Glu-393 acts as the Proton acceptor in catalysis. An FAD-binding site is contributed by 395–397; sequence TSN.

This sequence belongs to the acyl-CoA dehydrogenase family. In terms of assembly, homotetramer. It depends on FAD as a cofactor.

It catalyses the reaction 2-methylbutanoyl-CoA + oxidized [electron-transfer flavoprotein] + H(+) = (2E)-2-methylbut-2-enoyl-CoA + reduced [electron-transfer flavoprotein]. It functions in the pathway lipid metabolism; mitochondrial fatty acid beta-oxidation. Its pathway is amino-acid degradation; L-isoleucine degradation. Its function is as follows. Probable short and branched chain specific acyl-CoA dehydrogenase that catalyzes the removal of one hydrogen from C-2 and C-3 of the fatty acyl-CoA thioester, resulting in the formation of trans-2-enoyl-CoA. This Dictyostelium discoideum (Social amoeba) protein is Probable short/branched chain specific acyl-CoA dehydrogenase (acadsb).